We begin with the raw amino-acid sequence, 428 residues long: Enolase (428 aa).

Glutamine 163 contributes to the (2R)-2-phosphoglycerate binding site. Glutamate 205 serves as the catalytic Proton donor. Positions 242, 283, and 310 each coordinate Mg(2+). Residues lysine 335, arginine 364, serine 365, and lysine 386 each contribute to the (2R)-2-phosphoglycerate site. The active-site Proton acceptor is lysine 335.

Belongs to the enolase family. Mg(2+) is required as a cofactor.

Its subcellular location is the cytoplasm. It is found in the secreted. It localises to the cell surface. It carries out the reaction (2R)-2-phosphoglycerate = phosphoenolpyruvate + H2O. It functions in the pathway carbohydrate degradation; glycolysis; pyruvate from D-glyceraldehyde 3-phosphate: step 4/5. Functionally, catalyzes the reversible conversion of 2-phosphoglycerate (2-PG) into phosphoenolpyruvate (PEP). It is essential for the degradation of carbohydrates via glycolysis. The chain is Enolase from Saccharopolyspora erythraea (strain ATCC 11635 / DSM 40517 / JCM 4748 / NBRC 13426 / NCIMB 8594 / NRRL 2338).